The primary structure comprises 363 residues: UDP-N-acetylglucosamine--N-acetylmuramyl-(pentapeptide) pyrophosphoryl-undecaprenol N-acetylglucosamine transferase (363 aa).

Residues 15-17, N127, R163, S191, I244, 263-268, and Q288 contribute to the UDP-N-acetyl-alpha-D-glucosamine site; these read TGG and ALTVSE.

The protein belongs to the glycosyltransferase 28 family. MurG subfamily.

The protein localises to the cell inner membrane. It carries out the reaction di-trans,octa-cis-undecaprenyl diphospho-N-acetyl-alpha-D-muramoyl-L-alanyl-D-glutamyl-meso-2,6-diaminopimeloyl-D-alanyl-D-alanine + UDP-N-acetyl-alpha-D-glucosamine = di-trans,octa-cis-undecaprenyl diphospho-[N-acetyl-alpha-D-glucosaminyl-(1-&gt;4)]-N-acetyl-alpha-D-muramoyl-L-alanyl-D-glutamyl-meso-2,6-diaminopimeloyl-D-alanyl-D-alanine + UDP + H(+). It participates in cell wall biogenesis; peptidoglycan biosynthesis. Functionally, cell wall formation. Catalyzes the transfer of a GlcNAc subunit on undecaprenyl-pyrophosphoryl-MurNAc-pentapeptide (lipid intermediate I) to form undecaprenyl-pyrophosphoryl-MurNAc-(pentapeptide)GlcNAc (lipid intermediate II). This Pectobacterium carotovorum subsp. carotovorum (strain PC1) protein is UDP-N-acetylglucosamine--N-acetylmuramyl-(pentapeptide) pyrophosphoryl-undecaprenol N-acetylglucosamine transferase.